The primary structure comprises 810 residues: RING finger protein unkempt homolog (810 aa).

Residues 1–24 are disordered; the sequence is MSKGPGPGGSAASSAPPAATAQVL. Residues 10-19 are compositionally biased toward low complexity; the sequence is SAASSAPPAA. 5 C3H1-type zinc fingers span residues 84–113, 124–154, 215–241, 251–285, and 293–321; these read YSPDVYCTKYDEATGLCPEGDECPFLHRTT, YYKTGICIHETDSKGNCTKNGLHCAFAHGPH, NYKTEPCKKPPRLCRQGYACPYYHNSK, KYRSSPCPNVKHGDEWGDPGKCENGDACQYCHTRT, and IYKSTKCNDMQQSGSCPRGPFCAFAHVEQ. The interval 239–265 is disordered; that stretch reads NSKDRRRSPRKHKYRSSPCPNVKHGDE. Serine 240 bears the Phosphoserine mark. The span at 241–253 shows a compositional bias: basic residues; that stretch reads KDRRRSPRKHKYR. The interval 324-343 is disordered; it reads LSDDLQPSSAVSSPTQPGPV. A compositionally biased stretch (polar residues) spans 328–338; that stretch reads LQPSSAVSSPT. Serine 374, serine 378, serine 385, and serine 631 each carry phosphoserine. Residues 643-723 are a coiled coil; that stretch reads GAAELARLRQ…QEELERLHAG (81 aa). Residues 766-801 form an RING-type; degenerate zinc finger; sequence SVKCLKCQEQKRAVLPCQHAALCELCAEGSECPICQ.

It belongs to the unkempt family.

Its subcellular location is the cytoplasm. Its function is as follows. Sequence-specific RNA-binding protein which plays an important role in the establishment and maintenance of the early morphology of cortical neurons during embryonic development. Acts as a translation repressor and controls a translationally regulated cell morphology program to ensure proper structuring of the nervous system. Translational control depends on recognition of its binding element within target mRNAs which consists of a mandatory UAG trimer upstream of a U/A-rich motif. Associated with polysomes. In Homo sapiens (Human), this protein is RING finger protein unkempt homolog (UNK).